An 84-amino-acid polypeptide reads, in one-letter code: Alpha-mammal toxin Aah3 (84 aa).

The N-terminal stretch at 1-19 is a signal peptide; that stretch reads MNYLVMISLALLLMTGVES. The LCN-type CS-alpha/beta domain maps to 21 to 82; sequence RDGYIVDSKN…PIKDPSYKCH (62 aa). Disulfide bonds link Cys31/Cys81, Cys35/Cys53, Cys39/Cys63, and Cys43/Cys65. Position 84 (Arg84) is a propeptide, removed by a carboxypeptidase.

It belongs to the long (4 C-C) scorpion toxin superfamily. Sodium channel inhibitor family. Alpha subfamily. In terms of tissue distribution, expressed by the venom gland.

The protein localises to the secreted. Alpha toxins bind voltage-independently at site-3 of sodium channels (Nav) and inhibit the inactivation of the activated channels, thereby blocking neuronal transmission. The polypeptide is Alpha-mammal toxin Aah3 (Androctonus australis (Sahara scorpion)).